A 1306-amino-acid polypeptide reads, in one-letter code: Angiotensin-converting enzyme (1306 aa).

Positions 1-29 (MGAASGRRGPGLLLPLPLLLLLPPQPALA) are cleaved as a signal peptide. The Extracellular segment spans residues 30 to 1256 (LDPGLQPGNF…GLDLDAQQAR (1227 aa)). 9 N-linked (GlcNAc...) asparagine glycosylation sites follow: Asn-38, Asn-54, Asn-74, Glu-103, Asn-111, Ile-121, Tyr-140, Asn-146, and Asn-160. 2 consecutive Peptidase M2 domains span residues 40–624 (SADE…LGWP) and 643–1222 (VTDE…LGWP). Cys-157 and Cys-165 form a disulfide bridge. Position 231 (Tyr-231) interacts with chloride. 2 N-linked (GlcNAc...) asparagine glycosylation sites follow: Asn-318 and Asn-368. The cysteines at positions 359 and 377 are disulfide-linked. His-390 serves as a coordination point for Zn(2+). Glu-391 functions as the Proton acceptor 1 in the catalytic mechanism. The Zn(2+) site is built by His-394, Pro-414, Glu-418, and Arg-442. Asn-445 and Asn-509 each carry an N-linked (GlcNAc...) asparagine glycan. His-520 functions as the Proton donor 1 in the catalytic mechanism. Arg-529 provides a ligand contact to chloride. A disulfide bond links Cys-545 and Cys-557. 2 N-linked (GlcNAc...) asparagine glycosylation sites follow: Asn-617 and Asn-677. Asn-695 and Asn-714 each carry an N-linked (GlcNAc...) (complex) asparagine glycan. Residues Cys-757 and Cys-763 are joined by a disulfide bond. N-linked (GlcNAc...) asparagine; partial glycosylation occurs at Asn-760. Chloride-binding residues include Arg-791 and Tyr-829. A glycan (N-linked (GlcNAc...) asparagine; partial) is linked at Asn-942. Cys-957 and Cys-975 are oxidised to a cystine. His-988 is a Zn(2+) binding site. Glu-989 serves as the catalytic Proton acceptor 2. Zn(2+) is bound by residues His-992 and Glu-1016. Chloride contacts are provided by Trp-1090 and Arg-1094. Catalysis depends on His-1118, which acts as the Proton donor 2. Arg-1127 lines the chloride pocket. Cys-1143 and Cys-1155 form a disulfide bridge. N-linked (GlcNAc...) asparagine; partial glycosylation is present at Asn-1191. Positions 1215–1256 (HGEKLGWPQYNWTPNSARSEGPLPDSGRVSFLGLDLDAQQAR) are juxtamembrane stalk. The helical transmembrane segment at 1257-1277 (VGQWLLLFLGIALLVATLGLS) threads the bilayer. Residues 1278 to 1306 (QRLFSIRHRSLHRHSHGPQFGSEVELRHS) are Cytoplasmic-facing. Phosphoserine is present on Ser-1299.

It belongs to the peptidase M2 family. In terms of assembly, monomer and homodimer; homodimerizes following binding to an inhibitor. Interacts with calmodulin (CALM1, CALM2 or CALM3); interaction takes place in the cytoplasmic region and regulates phosphorylation and proteolytic cleavage. Requires Zn(2+) as cofactor. It depends on chloride as a cofactor. Produced following proteolytic cleavage by secretase enzymes that cleave the transmembrane form in the juxtamembrane stalk region upstream of the transmembrane region. Cleavage can take place at different sites of the juxtamembrane stalk region. In terms of processing, phosphorylated by CK2 on Ser-1299; which allows membrane retention. Phosphorylated on tyrosine residues on its extracellular part, promoting cleavage by secretase enzymes and formation of the soluble form (Angiotensin-converting enzyme, soluble form). Ubiquitously expressed, with highest levels in lung, kidney, heart, gastrointestinal system and prostate. As to expression, specifically expressed in spermatocytes and adult testis.

It is found in the cell membrane. The protein localises to the cytoplasm. The protein resides in the secreted. The catalysed reaction is Release of a C-terminal dipeptide, oligopeptide-|-Xaa-Yaa, when Xaa is not Pro, and Yaa is neither Asp nor Glu. Thus, conversion of angiotensin I to angiotensin II, with increase in vasoconstrictor activity, but no action on angiotensin II.. It carries out the reaction angiotensin I + H2O = L-histidyl-L-leucine + angiotensin II. The enzyme catalyses bradykinin + H2O = L-Phe-L-Arg + bradykinin(1-7). It catalyses the reaction substance P + H2O = substance P(1-9) + L-Leu-L-Met-NH2. The catalysed reaction is substance P + H2O = substance P(1-8) + Gly-L-Leu-L-Met-NH2. It carries out the reaction substance P + H2O = L-Phe-L-Phe-Gly-L-Leu-L-Met-NH2 + substance P(1-6). The enzyme catalyses neurotensin + H2O = neurotensin(1-11) + L-isoleucyl-L-leucine. It catalyses the reaction goralatide + H2O = N-acetyl-L-seryl-L-aspartate + L-lysyl-L-proline. The catalysed reaction is Met-enkephalin + H2O = L-phenylalanyl-L-methionine + L-tyrosylglycylglycine. It carries out the reaction Leu-enkephalin + H2O = L-tyrosylglycylglycine + L-phenylalanyl-L-leucine. The enzyme catalyses Met-enkephalin-Arg-Phe + H2O = L-arginyl-L-phenylalanine + Met-enkephalin. The dipeptidyl carboxypeptidase activity is strongly activated by chloride. The dipeptidyl carboxypeptidase activity is specifically inhibited by lisinopril, captopril and enalaprilat. Its activity is regulated as follows. Strongly inhibited by lisinopril and captopril. Functionally, dipeptidyl carboxypeptidase that removes dipeptides from the C-terminus of a variety of circulating hormones, such as angiotensin I, bradykinin or enkephalins, thereby playing a key role in the regulation of blood pressure, electrolyte homeostasis or synaptic plasticity. Composed of two similar catalytic domains, each possessing a functional active site, with different selectivity for substrates. Plays a major role in the angiotensin-renin system that regulates blood pressure and sodium retention by the kidney by converting angiotensin I to angiotensin II, resulting in an increase of the vasoconstrictor activity of angiotensin. Also able to inactivate bradykinin, a potent vasodilator, and therefore enhance the blood pressure response. Acts as a regulator of synaptic transmission by mediating cleavage of neuropeptide hormones, such as substance P, neurotensin or enkephalins. Catalyzes degradation of different enkephalin neuropeptides (Met-enkephalin, Leu-enkephalin, Met-enkephalin-Arg-Phe and possibly Met-enkephalin-Arg-Gly-Leu). Acts as a regulator of synaptic plasticity in the nucleus accumbens of the brain by mediating cleavage of Met-enkephalin-Arg-Phe, a strong ligand of Mu-type opioid receptor OPRM1, into Met-enkephalin. Met-enkephalin-Arg-Phe cleavage by ACE decreases activation of OPRM1, leading to long-term synaptic potentiation of glutamate release. Also acts as a regulator of hematopoietic stem cell differentiation by mediating degradation of hemoregulatory peptide N-acetyl-SDKP (AcSDKP). Acts as a regulator of cannabinoid signaling pathway by mediating degradation of hemopressin, an antagonist peptide of the cannabinoid receptor CNR1. Involved in amyloid-beta metabolism by catalyzing degradation of Amyloid-beta protein 40 and Amyloid-beta protein 42 peptides, thereby preventing plaque formation. Catalyzes cleavage of cholecystokinin (maturation of Cholecystokinin-8 and Cholecystokinin-5) and Gonadoliberin-1 (both maturation and degradation) hormones. Degradation of hemoregulatory peptide N-acetyl-SDKP (AcSDKP) and amyloid-beta proteins is mediated by the N-terminal catalytic domain, while angiotensin I and cholecystokinin cleavage is mediated by the C-terminal catalytic region. In terms of biological role, soluble form that is released in blood plasma and other body fluids following proteolytic cleavage in the juxtamembrane stalk region. Its function is as follows. Isoform produced by alternative promoter usage that is specifically expressed in spermatocytes and adult testis, and which is required for male fertility. In contrast to somatic isoforms, only contains one catalytic domain. Acts as a dipeptidyl carboxypeptidase that removes dipeptides from the C-terminus of substrates. The identity of substrates that are needed for male fertility is unknown. May also have a glycosidase activity which releases GPI-anchored proteins from the membrane by cleaving the mannose linkage in the GPI moiety. The GPIase activity was reported to be essential for the egg-binding ability of the sperm. This activity is however unclear and has been challenged by other groups, suggesting that it may be indirect. The sequence is that of Angiotensin-converting enzyme from Homo sapiens (Human).